A 23-amino-acid chain; its full sequence is Acidic phospholipase A2 CTs-A2 (23 aa).

Ca(2+) is required as a cofactor. In terms of processing, contains 7 disulfide bonds. As to expression, expressed by the venom gland.

The protein localises to the secreted. It carries out the reaction a 1,2-diacyl-sn-glycero-3-phosphocholine + H2O = a 1-acyl-sn-glycero-3-phosphocholine + a fatty acid + H(+). Its function is as follows. Snake venom phospholipase A2 (PLA2) that shows a moderate inhibition of ADP-induced human platelet aggregation when tested on platelet rich plasma. Exhibits moderate hydrolytic activities and prefers the anionic micelles (dPPC with deoxycholate) to the zwitterionic micelles (dPPC with Triton X-100). PLA2 catalyzes the calcium-dependent hydrolysis of the 2-acyl groups in 3-sn-phosphoglycerides. This is Acidic phospholipase A2 CTs-A2 from Trimeresurus stejnegeri (Chinese green tree viper).